Consider the following 125-residue polypeptide: Large ribosomal subunit protein bL12 (125 aa).

This sequence belongs to the bacterial ribosomal protein bL12 family. In terms of assembly, homodimer. Part of the ribosomal stalk of the 50S ribosomal subunit. Forms a multimeric L10(L12)X complex, where L10 forms an elongated spine to which 2 to 4 L12 dimers bind in a sequential fashion. Binds GTP-bound translation factors.

In terms of biological role, forms part of the ribosomal stalk which helps the ribosome interact with GTP-bound translation factors. Is thus essential for accurate translation. The protein is Large ribosomal subunit protein bL12 of Delftia acidovorans (strain DSM 14801 / SPH-1).